Reading from the N-terminus, the 465-residue chain is MMKMSKEYSTISKIYGPLMIVEGVKGVAYGEVVEIETESGEKRKGQVLDARENMAIVQVFEGTRDLDIKTTSVRFTGETLKVPVSMDMLGRIFNGIGKPIDGGPEIIPEDRRDVHGAPLNPVARAYPRDFIQTGISAIDGMNTLVRGQKLPIFSGSGLPHNQLAAQIARQAKVLGEEESFAVVFAAMGITYEEANFFKKSFEETGAIERAVLFLNLADDPAIERIITPRMALTVAEYLAFDYDMHVLVILTDMTNYCEALREISAAREEVPGRRGYPGYMYTDLATIYERAGRIRGRKGSITQMPILTMPDDDITHPIPDLTGYITEGQIVLSRELHRKGIYPPIDVLPSLSRLMKDGIGKGKTREDHPQLAQQLYAAYAEGRSLRDLVAVVGEEALSETDKKYLEFADRFEREFVAQGYYEDRSIEETLDLGWELLSILPESELKRVKKEMIMKYHPKYRKRSS.

The protein belongs to the ATPase alpha/beta chains family. As to quaternary structure, has multiple subunits with at least A(3), B(3), C, D, E, F, H, I and proteolipid K(x).

It localises to the cell membrane. Functionally, component of the A-type ATP synthase that produces ATP from ADP in the presence of a proton gradient across the membrane. The B chain is a regulatory subunit. The chain is A-type ATP synthase subunit B from Pyrococcus horikoshii (strain ATCC 700860 / DSM 12428 / JCM 9974 / NBRC 100139 / OT-3).